The primary structure comprises 514 residues: HMG box-containing protein 1 (514 aa).

Residues alanine 150–asparagine 182 are disordered. Over residues tryptophan 170–asparagine 182 the composition is skewed to basic and acidic residues. The AXH domain maps to tryptophan 203–phenylalanine 345. Positions cysteine 434 to tryptophan 502 form a DNA-binding region, HMG box.

In terms of assembly, binds the second PAH repeat of SIN3A. Binds TCF4. Binds RB1. In terms of processing, ubiquitinated by the CTLH E3 ubiquitin-protein ligase complex, leading to subsequent proteasomal degradation.

The protein resides in the nucleus. Functionally, transcriptional repressor that binds to the promoter region of target genes. Plays a role in the regulation of the cell cycle and of the Wnt pathway. Binds preferentially to the sequence 5'-TTCATTCATTCA-3'. Binding to the histone H1.0 promoter is enhanced by interaction with RB1. Disrupts the interaction between DNA and TCF4. The chain is HMG box-containing protein 1 (HBP1) from Homo sapiens (Human).